The chain runs to 1591 residues: Rho guanine nucleotide exchange factor TIAM1 (1591 aa).

Positions 1 to 78 (MGNAESQHVE…AENGLEPFSQ (78 aa)) are disordered. Glycine 2 is lipidated: N-myristoyl glycine. Residues 7-19 (QHVEHEFYGEKHA) show a composition bias toward basic and acidic residues. Over residues 20–49 (SLGRKHTSRSLRLSHKTRRTRHASSGKVIH) the composition is skewed to basic residues. The segment covering 53–67 (EVSTRSSSTPSIPQS) has biased composition (low complexity). Phosphoserine is present on serine 231. Disordered regions lie at residues 298 to 379 (SEGA…GDAA) and 393 to 422 (MSTT…SPGQ). Composition is skewed to polar residues over residues 300-313 (GATN…NSMQ) and 340-361 (TTDT…SPTT). A phosphoserine mark is found at serine 356 and serine 358. Low complexity predominate over residues 367-377 (GSDSGSSSTGD). Residues 412–422 (QSSGTLSSPGQ) show a composition bias toward polar residues. The region spanning 434–549 (VRKAGALAVK…TAIHSACATA (116 aa)) is the PH 1 domain. Residue serine 695 is modified to Phosphoserine. In terms of domain architecture, RBD spans 765–832 (TPSWFCLPNN…QPEEDIYELL (68 aa)). Tyrosine 829 is modified (phosphotyrosine; by NTRK2). The region spanning 845–908 (SIHIEKSDTA…NNRAADALNS (64 aa)) is the PDZ domain. The segment at 939–1034 (SPPHRVDGPA…TGPQLATMRQ (96 aa)) is disordered. Over residues 958-975 (LTSNPGHSLCSEQGSSAE) the composition is skewed to polar residues. Residues 977–990 (APEETEGPDLESSD) are compositionally biased toward acidic residues. Residues 1014-1024 (PSDQSPSPQDS) are compositionally biased toward low complexity. Positions 1025–1034 (TGPQLATMRQ) are enriched in polar residues. Residues 1040–1234 (KLRKVICELL…NKVASHINEM (195 aa)) form the DH domain. A PH 2 domain is found at 1261 to 1397 (DLSMGDLLLH…KAVHSILRDK (137 aa)). At tyrosine 1323 the chain carries Phosphotyrosine. Glycyl lysine isopeptide (Lys-Gly) (interchain with G-Cter in ubiquitin) cross-links involve residues lysine 1404 and lysine 1420. The segment at 1456–1482 (TIDSDAVSASSPEKESQQPPGGGDTDR) is disordered. The residue at position 1519 (serine 1519) is a Phosphoserine.

This sequence belongs to the TIAM family. As to quaternary structure, component of the Par polarity complex, composed of at least phosphorylated PRKCZ, PARD3 and TIAM1. Interacts with NTRK2; mediates the activation of RAC1 by BDNF. Interacts with MAPK8IP2 and CD44. Interacts with BAIAP2. Interacts with EPHA8; regulates clathrin-mediated endocytosis of EPHA8. Interacts with PARD3. Interacts (via PDZ domain) with CNTNAP4, SDC1 and SDC3 (via C-terminus). Ubiquitinated. Undergoes 'Lys-48' ubiquitination at Lys-1404 and Lys-1420 by a CUL3(KBTBD6/7) E3 ubiquitin ligase complex composed of CUL3, RBX1, KBTBD6 and KBTBD7. 'Lys-48' ubiquitination at Lys-1404 and Lys-1420 triggers proteasomal degradation. Ubiquitination at Lys-1404 and Lys-1420 by CUL3(KBTBD6/7) also requires the membrane-associated protein GABARAP and may therefore be spatially restricted within the cell. In terms of tissue distribution, found in virtually all analyzed tumor cell lines including B- and T-lymphomas, neuroblastomas, melanomas and carcinomas.

Its subcellular location is the cell junction. The protein resides in the cell membrane. Guanyl-nucleotide exchange factor that activates RHO-like proteins and connects extracellular signals to cytoskeletal activities. Activates RAC1, CDC42, and to a lesser extent RHOA and their downstream signaling to regulate processes like cell adhesion and cell migration. In Homo sapiens (Human), this protein is Rho guanine nucleotide exchange factor TIAM1.